The primary structure comprises 350 residues: Biotin synthase (350 aa).

One can recognise a Radical SAM core domain in the interval 41–268; that stretch reads NEVQISRLLS…KSRVRLSAGR (228 aa). Positions 56, 60, and 63 each coordinate [4Fe-4S] cluster. Residues Cys-100, Cys-131, Cys-191, and Arg-263 each contribute to the [2Fe-2S] cluster site.

Belongs to the radical SAM superfamily. Biotin synthase family. In terms of assembly, homodimer. Requires [4Fe-4S] cluster as cofactor. [2Fe-2S] cluster serves as cofactor.

It carries out the reaction (4R,5S)-dethiobiotin + (sulfur carrier)-SH + 2 reduced [2Fe-2S]-[ferredoxin] + 2 S-adenosyl-L-methionine = (sulfur carrier)-H + biotin + 2 5'-deoxyadenosine + 2 L-methionine + 2 oxidized [2Fe-2S]-[ferredoxin]. The protein operates within cofactor biosynthesis; biotin biosynthesis; biotin from 7,8-diaminononanoate: step 2/2. Functionally, catalyzes the conversion of dethiobiotin (DTB) to biotin by the insertion of a sulfur atom into dethiobiotin via a radical-based mechanism. The polypeptide is Biotin synthase (Shewanella piezotolerans (strain WP3 / JCM 13877)).